Reading from the N-terminus, the 145-residue chain is 3-hydroxyacyl-[acyl-carrier-protein] dehydratase FabZ (145 aa).

His48 is a catalytic residue.

This sequence belongs to the thioester dehydratase family. FabZ subfamily.

It is found in the cytoplasm. The catalysed reaction is a (3R)-hydroxyacyl-[ACP] = a (2E)-enoyl-[ACP] + H2O. In terms of biological role, involved in unsaturated fatty acids biosynthesis. Catalyzes the dehydration of short chain beta-hydroxyacyl-ACPs and long chain saturated and unsaturated beta-hydroxyacyl-ACPs. The sequence is that of 3-hydroxyacyl-[acyl-carrier-protein] dehydratase FabZ from Geobacillus sp. (strain WCH70).